The chain runs to 129 residues: Small ribosomal subunit protein uS11 (129 aa).

Belongs to the universal ribosomal protein uS11 family. As to quaternary structure, part of the 30S ribosomal subunit. Interacts with proteins S7 and S18. Binds to IF-3.

In terms of biological role, located on the platform of the 30S subunit, it bridges several disparate RNA helices of the 16S rRNA. Forms part of the Shine-Dalgarno cleft in the 70S ribosome. This is Small ribosomal subunit protein uS11 from Geobacillus thermodenitrificans (strain NG80-2).